The following is a 624-amino-acid chain: Probable potassium transport system protein Kup 1 (624 aa).

Transmembrane regions (helical) follow at residues 10–30 (LALG…LYAL), 48–68 (LSLI…MIIF), 94–114 (PVFY…GMLT), 133–153 (LYPY…SLQA), 159–179 (IGYL…ILGI), 210–230 (FLLG…ADIG), 242–262 (FFIA…NLIV), 270–290 (PFFM…ATVA), 331–351 (IYVP…CLAF), 363–383 (IAVN…AVSI), 388–408 (TFNV…FLGA), and 413–433 (FITG…IMYS).

It belongs to the HAK/KUP transporter (TC 2.A.72) family.

Its subcellular location is the cell inner membrane. The catalysed reaction is K(+)(in) + H(+)(in) = K(+)(out) + H(+)(out). Transport of potassium into the cell. Likely operates as a K(+):H(+) symporter. The protein is Probable potassium transport system protein Kup 1 of Legionella pneumophila (strain Paris).